The following is a 170-amino-acid chain: MANPKNTAALQELKARFEEADATVLTEYRGLSVVETTELRRALGQDVTYSVAKNTLLKLAAKEAGIEIDESLLTGPTAVAFIKGEAVDAAKAMKAFGKDHEAFVVKGGNMDGAALSAEQVMAIADLDNRETTLAKLAGALQGSLAKAAGLFNAPASQVARLAAALQEKKD.

This sequence belongs to the universal ribosomal protein uL10 family. As to quaternary structure, part of the ribosomal stalk of the 50S ribosomal subunit. The N-terminus interacts with L11 and the large rRNA to form the base of the stalk. The C-terminus forms an elongated spine to which L12 dimers bind in a sequential fashion forming a multimeric L10(L12)X complex.

In terms of biological role, forms part of the ribosomal stalk, playing a central role in the interaction of the ribosome with GTP-bound translation factors. The polypeptide is Large ribosomal subunit protein uL10 (Corynebacterium urealyticum (strain ATCC 43042 / DSM 7109)).